The primary structure comprises 55 residues: DNA-binding protein (55 aa).

The interval 1 to 55 (MVYRRRRRSSTGTTYGSTRRRRSSGYRRRPGRPRTYRRSRSRSSTGRRSYRTRYY) is disordered. A run of 2 repeats spans residues 5–10 (RRRRSS) and 19–24 (RRRRSS). The tract at residues 5-24 (RRRRSSTGTTYGSTRRRRSS) is 2 X 6 AA repeats of R-R-R-R-S-S. Residues 18 to 41 (TRRRRSSGYRRRPGRPRTYRRSRS) are compositionally biased toward basic residues.

As to quaternary structure, interacts with protein AC132. Phosphorylated.

It localises to the virion. Its subcellular location is the host cytoplasm. Functionally, plays a role in viral DNA packaging and nucleocapsid assembly. Promotes viral gene transcription during the late stage of infection while it is non-essential for the basal level of viral gene transcription. The polypeptide is DNA-binding protein (P6.9) (Lepidoptera (butterflies and moths)).